The chain runs to 75 residues: Large ribosomal subunit protein uL29 (75 aa).

Belongs to the universal ribosomal protein uL29 family.

This chain is Large ribosomal subunit protein uL29, found in Pyrobaculum aerophilum (strain ATCC 51768 / DSM 7523 / JCM 9630 / CIP 104966 / NBRC 100827 / IM2).